The primary structure comprises 153 residues: MLGNYYFAIVGHYDNPVYEKEFNQQMKMDSNDHRHLNQFIVHAALDLVDESMWGTTGMYLKSVDKFNEWFVSAFDPPLSWIIDPQFFLDLTSWMRFMMLHDVKNDDGIKNFFSDVYETFIKVLMNPFYEINSKIKSANFDKKVLLAAKKHILP.

This sequence belongs to the TRAPP small subunits family. Sedlin subfamily. In terms of assembly, part of the multisubunit TRAPP (transport protein particle) complex.

It localises to the cytoplasm. The protein resides in the perinuclear region. It is found in the endoplasmic reticulum. Its subcellular location is the golgi apparatus. Functionally, may play a role in vesicular transport from endoplasmic reticulum to Golgi. The protein is Probable trafficking protein particle complex subunit 2 of Nematostella vectensis (Starlet sea anemone).